A 334-amino-acid chain; its full sequence is MARPRGGRWLLGVLLALCRLAAPLAKSLEPVSWSAGNPKFMSGKGLVIYPEIGDKLDIICPKAEPSKPYDYYKLYLVKKDQADACSTVMDPNVLVTCNRPEQEIRFTIKFQEFSPNYMGLEFKRQQDYFITSTSNGTLDGLENREGGVCQTRSMKIVMKVGQDPNAVIPEQLTTSRPSKEADNTVKIVTQSPRHKVPTVEEPGKPGSVNQNGQETQGPSDGFLSSKVAVFAAIGAGCVIFILIIIFLVVLLIKIRKRHRKHTQQRAAALSLSTLASPKCSGNAGSEPSDIIIPLRTTENNYCPHYEKVSGDYGHPVYIVQEMPPQSPANIYYKV.

Residues M1–A25 form the signal peptide. One can recognise an Ephrin RBD domain in the interval K26–V160. Over K26–A231 the chain is Extracellular. 2 disulfide bridges follow: C60–C97 and C85–C149. A glycan (N-linked (GlcNAc...) asparagine) is linked at N135. The segment at S175–P218 is disordered. Polar residues predominate over residues S207 to P218. Residues A232 to I252 traverse the membrane as a helical segment. Residues K253 to V334 lie on the Cytoplasmic side of the membrane. The PDZ-binding signature appears at Y332 to V334.

The protein belongs to the ephrin family. As to quaternary structure, binds to the receptor tyrosine kinase EPHB2. Interacts with GRIP1 and GRIP2. Post-translationally, inducible phosphorylation of tyrosine residues in the cytoplasmic domain.

The protein localises to the membrane. Cell surface transmembrane ligand for Eph receptors, a family of receptor tyrosine kinases which are crucial for migration, repulsion and adhesion during neuronal, vascular and epithelial development. Binds promiscuously Eph receptors residing on adjacent cells, leading to contact-dependent bidirectional signaling into neighboring cells. The signaling pathway downstream of the receptor is referred to as forward signaling while the signaling pathway downstream of the ephrin ligand is referred to as reverse signaling. This chain is Ephrin-B1 (EFNB1), found in Gallus gallus (Chicken).